Consider the following 140-residue polypeptide: UPF0134 protein MPN_094 (140 aa).

It belongs to the UPF0134 family.

In Mycoplasma pneumoniae (strain ATCC 29342 / M129 / Subtype 1) (Mycoplasmoides pneumoniae), this protein is UPF0134 protein MPN_094.